We begin with the raw amino-acid sequence, 434 residues long: Meiosis-specific kinetochore protein (434 aa).

2 disordered regions span residues 1 to 102 (MDKI…PCET) and 249 to 289 (VFAE…PDNK). Residues 46–62 (KGKEQGLRKITEKKELS) are compositionally biased toward basic and acidic residues. Residues 64–76 (LTGSSSQRPSLLS) show a composition bias toward polar residues. Residues 334-336 (STP) carry the POLO box domain (PBD)-binding motif. Residues 391–394 (EICC) form a required for localization to kinetochores region. The tract at residues 404–424 (QMRRKDPAVKNRCSPPKDVPL) is disordered.

In terms of assembly, interacts with CENPC. Interacts with PLK1; required for recruitment of PLK1 at kinetochores. In terms of tissue distribution, germ cell-specific. Expressed in both testis and ovary. Not expressed in other tissues.

It is found in the chromosome. It localises to the centromere. The protein resides in the kinetochore. Key regulator of kinetochore function during meiosis I: required both for mono-orientation of kinetochores on sister chromosomes and protection of centromeric cohesin from separase-mediated cleavage. Acts by facilitating kinetochore mono-orientation during meiosis I, when kinetochores on sister chromosomes face the same direction and are thus captured and pulled by spindle fibers from the same pole. Also required to prevent cleavage of cohesin at centromeres during meiosis I, possibly by acting as a regulator of the shugoshin-dependent protection pathway. Acts in collaboration with PLK1: required for PLK1 enrichment to kinetochores. Not required during meiosis II or mitosis. The chain is Meiosis-specific kinetochore protein from Mus musculus (Mouse).